The sequence spans 435 residues: Gamma-glutamyl phosphate reductase (435 aa).

This sequence belongs to the gamma-glutamyl phosphate reductase family.

The protein localises to the cytoplasm. The enzyme catalyses L-glutamate 5-semialdehyde + phosphate + NADP(+) = L-glutamyl 5-phosphate + NADPH + H(+). It participates in amino-acid biosynthesis; L-proline biosynthesis; L-glutamate 5-semialdehyde from L-glutamate: step 2/2. Its function is as follows. Catalyzes the NADPH-dependent reduction of L-glutamate 5-phosphate into L-glutamate 5-semialdehyde and phosphate. The product spontaneously undergoes cyclization to form 1-pyrroline-5-carboxylate. The protein is Gamma-glutamyl phosphate reductase of Parasynechococcus marenigrum (strain WH8102).